The chain runs to 383 residues: Lipid-A-disaccharide synthase (383 aa).

It belongs to the LpxB family.

It carries out the reaction a lipid X + a UDP-2-N,3-O-bis[(3R)-3-hydroxyacyl]-alpha-D-glucosamine = a lipid A disaccharide + UDP + H(+). The protein operates within bacterial outer membrane biogenesis; LPS lipid A biosynthesis. Its function is as follows. Condensation of UDP-2,3-diacylglucosamine and 2,3-diacylglucosamine-1-phosphate to form lipid A disaccharide, a precursor of lipid A, a phosphorylated glycolipid that anchors the lipopolysaccharide to the outer membrane of the cell. This chain is Lipid-A-disaccharide synthase, found in Anaeromyxobacter sp. (strain K).